The chain runs to 479 residues: D-alanyl-D-alanine carboxypeptidase DacB (479 aa).

The N-terminal stretch at 1–26 is a signal peptide; the sequence is MKKLSSISTALGSFLLSVSFSLPTFA. Serine 69 acts as the Acyl-ester intermediate in catalysis. Lysine 72 acts as the Proton acceptor in catalysis. The active site involves serine 310. Lysine 420 is a substrate binding site.

It belongs to the peptidase S13 family.

The protein resides in the periplasm. The enzyme catalyses Preferential cleavage: (Ac)2-L-Lys-D-Ala-|-D-Ala. Also transpeptidation of peptidyl-alanyl moieties that are N-acyl substituents of D-alanine.. The protein operates within cell wall biogenesis; peptidoglycan biosynthesis. In terms of biological role, not involved in transpeptidation but exclusively catalyzes a DD-carboxypeptidase and DD-endopeptidase reaction. The sequence is that of D-alanyl-D-alanine carboxypeptidase DacB (dacB) from Haemophilus influenzae (strain ATCC 51907 / DSM 11121 / KW20 / Rd).